Here is a 281-residue protein sequence, read N- to C-terminus: Pantothenate synthetase (281 aa).

Position 30–37 (30–37 (MGYLHEGH)) interacts with ATP. Catalysis depends on His-37, which acts as the Proton donor. Residue Gln-61 participates in (R)-pantoate binding. Position 61 (Gln-61) interacts with beta-alanine. 147 to 150 (GEKD) serves as a coordination point for ATP. Residue Gln-153 participates in (R)-pantoate binding. ATP is bound by residues Ile-176 and 184–187 (KSSR).

This sequence belongs to the pantothenate synthetase family. Homodimer.

It is found in the cytoplasm. It catalyses the reaction (R)-pantoate + beta-alanine + ATP = (R)-pantothenate + AMP + diphosphate + H(+). The protein operates within cofactor biosynthesis; (R)-pantothenate biosynthesis; (R)-pantothenate from (R)-pantoate and beta-alanine: step 1/1. Functionally, catalyzes the condensation of pantoate with beta-alanine in an ATP-dependent reaction via a pantoyl-adenylate intermediate. In Clostridium botulinum (strain Okra / Type B1), this protein is Pantothenate synthetase.